The sequence spans 366 residues: Holliday junction branch migration complex subunit RuvB (366 aa).

A disordered region spans residues 1 to 49 (MAIISSKKQPPEPNGQPNKRPESAPAAPKEKVLQPEAAIDEQGKQEESI). A large ATPase domain (RuvB-L) region spans residues 13-210 (PNGQPNKRPE…FGLIQKLRFY (198 aa)). Residues isoleucine 49, arginine 50, glycine 91, lysine 94, threonine 95, threonine 96, 157–159 (EDY), arginine 200, tyrosine 210, and arginine 247 each bind ATP. Threonine 95 provides a ligand contact to Mg(2+). The segment at 211–281 (EVDELSQIVL…IAAEALQLFQ (71 aa)) is small ATPAse domain (RuvB-S). A head domain (RuvB-H) region spans residues 284-366 (PCGLDWTDRR…TPPNEQLSLL (83 aa)). Residues arginine 339 and arginine 344 each coordinate DNA.

The protein belongs to the RuvB family. In terms of assembly, homohexamer. Forms an RuvA(8)-RuvB(12)-Holliday junction (HJ) complex. HJ DNA is sandwiched between 2 RuvA tetramers; dsDNA enters through RuvA and exits via RuvB. An RuvB hexamer assembles on each DNA strand where it exits the tetramer. Each RuvB hexamer is contacted by two RuvA subunits (via domain III) on 2 adjacent RuvB subunits; this complex drives branch migration. In the full resolvosome a probable DNA-RuvA(4)-RuvB(12)-RuvC(2) complex forms which resolves the HJ.

Its subcellular location is the cytoplasm. The catalysed reaction is ATP + H2O = ADP + phosphate + H(+). Functionally, the RuvA-RuvB-RuvC complex processes Holliday junction (HJ) DNA during genetic recombination and DNA repair, while the RuvA-RuvB complex plays an important role in the rescue of blocked DNA replication forks via replication fork reversal (RFR). RuvA specifically binds to HJ cruciform DNA, conferring on it an open structure. The RuvB hexamer acts as an ATP-dependent pump, pulling dsDNA into and through the RuvAB complex. RuvB forms 2 homohexamers on either side of HJ DNA bound by 1 or 2 RuvA tetramers; 4 subunits per hexamer contact DNA at a time. Coordinated motions by a converter formed by DNA-disengaged RuvB subunits stimulates ATP hydrolysis and nucleotide exchange. Immobilization of the converter enables RuvB to convert the ATP-contained energy into a lever motion, pulling 2 nucleotides of DNA out of the RuvA tetramer per ATP hydrolyzed, thus driving DNA branch migration. The RuvB motors rotate together with the DNA substrate, which together with the progressing nucleotide cycle form the mechanistic basis for DNA recombination by continuous HJ branch migration. Branch migration allows RuvC to scan DNA until it finds its consensus sequence, where it cleaves and resolves cruciform DNA. The polypeptide is Holliday junction branch migration complex subunit RuvB (Trichormus variabilis (strain ATCC 29413 / PCC 7937) (Anabaena variabilis)).